The primary structure comprises 357 residues: Alanine racemase (357 aa).

The Proton acceptor; specific for D-alanine role is filled by K33. K33 carries the post-translational modification N6-(pyridoxal phosphate)lysine. Substrate is bound at residue R129. The active-site Proton acceptor; specific for L-alanine is Y253. Residue M301 coordinates substrate.

Belongs to the alanine racemase family. It depends on pyridoxal 5'-phosphate as a cofactor.

The catalysed reaction is L-alanine = D-alanine. It functions in the pathway amino-acid biosynthesis; D-alanine biosynthesis; D-alanine from L-alanine: step 1/1. Catalyzes the interconversion of L-alanine and D-alanine. May also act on other amino acids. This chain is Alanine racemase (alr), found in Pseudomonas fluorescens (strain ATCC BAA-477 / NRRL B-23932 / Pf-5).